The following is a 127-amino-acid chain: Small ribosomal subunit protein uS11 (127 aa).

The protein belongs to the universal ribosomal protein uS11 family. Part of the 30S ribosomal subunit. Interacts with proteins S7 and S18. Binds to IF-3.

Located on the platform of the 30S subunit, it bridges several disparate RNA helices of the 16S rRNA. Forms part of the Shine-Dalgarno cleft in the 70S ribosome. The protein is Small ribosomal subunit protein uS11 of Streptococcus pyogenes serotype M1.